A 71-amino-acid polypeptide reads, in one-letter code: Immune-induced peptide 18 (71 aa).

The first 24 residues, 1-24 (MKLIALCCLLLLGLLGFLAAPGVA), serve as a signal peptide directing secretion. The propeptide occupies 25 to 26 (SP). The interval 26–71 (PSRHTGPGNGSGSGAGSGNPFRSPSSQQRPLYYDAPIGKPSKTMYA) is disordered. Positions 32–42 (PGNGSGSGAGS) are enriched in gly residues.

In terms of tissue distribution, hemolymph (at protein level).

It is found in the secreted. This chain is Immune-induced peptide 18 (IM18), found in Drosophila melanogaster (Fruit fly).